Consider the following 400-residue polypeptide: E3 ubiquitin-protein ligase RNF149 (400 aa).

The first 32 residues, Met-1 to Gly-32, serve as a signal peptide directing secretion. Asn-52 and Asn-145 each carry an N-linked (GlcNAc...) asparagine glycan. One can recognise a PA domain in the interval Ser-67–Val-175. The chain crosses the membrane as a helical span at residues Val-201 to Phe-221. The segment at Cys-269 to Lys-310 adopts an RING-type; atypical zinc-finger fold. Residues Asp-325 to Ser-400 are disordered. Position 345 is a phosphoserine (Ser-345). Residues Asp-356–Glu-368 are compositionally biased toward low complexity. Positions Gly-389 to Ser-400 are enriched in basic and acidic residues.

Its subcellular location is the membrane. The enzyme catalyses S-ubiquitinyl-[E2 ubiquitin-conjugating enzyme]-L-cysteine + [acceptor protein]-L-lysine = [E2 ubiquitin-conjugating enzyme]-L-cysteine + N(6)-ubiquitinyl-[acceptor protein]-L-lysine.. It functions in the pathway protein modification; protein ubiquitination. In terms of biological role, E3 ubiquitin-protein ligase. Ubiquitinates BRAF, inducing its proteasomal degradation. This is E3 ubiquitin-protein ligase RNF149 (RNF149) from Homo sapiens (Human).